Reading from the N-terminus, the 278-residue chain is 4-deoxy-L-threo-5-hexosulose-uronate ketol-isomerase (278 aa).

Histidine 196, histidine 198, glutamate 203, and histidine 245 together coordinate Zn(2+).

It belongs to the KduI family. It depends on Zn(2+) as a cofactor.

It carries out the reaction 5-dehydro-4-deoxy-D-glucuronate = 3-deoxy-D-glycero-2,5-hexodiulosonate. It functions in the pathway glycan metabolism; pectin degradation; 2-dehydro-3-deoxy-D-gluconate from pectin: step 4/5. Functionally, catalyzes the isomerization of 5-dehydro-4-deoxy-D-glucuronate to 3-deoxy-D-glycero-2,5-hexodiulosonate. The polypeptide is 4-deoxy-L-threo-5-hexosulose-uronate ketol-isomerase (Pectobacterium carotovorum subsp. carotovorum (Erwinia carotovora subsp. carotovora)).